Reading from the N-terminus, the 167-residue chain is Large ribosomal subunit protein uL10 (167 aa).

Belongs to the universal ribosomal protein uL10 family. In terms of assembly, part of the ribosomal stalk of the 50S ribosomal subunit. The N-terminus interacts with L11 and the large rRNA to form the base of the stalk. The C-terminus forms an elongated spine to which L12 dimers bind in a sequential fashion forming a multimeric L10(L12)X complex.

Its function is as follows. Forms part of the ribosomal stalk, playing a central role in the interaction of the ribosome with GTP-bound translation factors. In Paraburkholderia phytofirmans (strain DSM 17436 / LMG 22146 / PsJN) (Burkholderia phytofirmans), this protein is Large ribosomal subunit protein uL10.